The primary structure comprises 219 residues: Cytidylate kinase (219 aa).

Gly21–Thr29 serves as a coordination point for ATP.

The protein belongs to the cytidylate kinase family. Type 1 subfamily.

It is found in the cytoplasm. The catalysed reaction is CMP + ATP = CDP + ADP. It catalyses the reaction dCMP + ATP = dCDP + ADP. The protein is Cytidylate kinase of Rickettsia africae (strain ESF-5).